Here is a 424-residue protein sequence, read N- to C-terminus: UDP-N-acetylglucosamine 1-carboxyvinyltransferase (424 aa).

Lys-22–Asn-23 contacts phosphoenolpyruvate. Arg-93 provides a ligand contact to UDP-N-acetyl-alpha-D-glucosamine. The active-site Proton donor is the Cys-117. The residue at position 117 (Cys-117) is a 2-(S-cysteinyl)pyruvic acid O-phosphothioketal. Residues Arg-122–Leu-126, Lys-162–Val-165, Asp-307, and Ile-329 contribute to the UDP-N-acetyl-alpha-D-glucosamine site.

This sequence belongs to the EPSP synthase family. MurA subfamily.

It localises to the cytoplasm. It carries out the reaction phosphoenolpyruvate + UDP-N-acetyl-alpha-D-glucosamine = UDP-N-acetyl-3-O-(1-carboxyvinyl)-alpha-D-glucosamine + phosphate. Its pathway is cell wall biogenesis; peptidoglycan biosynthesis. Functionally, cell wall formation. Adds enolpyruvyl to UDP-N-acetylglucosamine. This Haemophilus influenzae (strain PittGG) protein is UDP-N-acetylglucosamine 1-carboxyvinyltransferase.